The primary structure comprises 634 residues: RING finger protein 207 (634 aa).

The RING-type zinc-finger motif lies at 25–63 (CHLCQEQYEHPCLLDCYHTFCASCLRGRVADSRLTCPVC). The B box-type; atypical zinc finger occupies 93 to 145 (EETVQCANCDLECKKQDVDAMYYCNTCCQPLCRDCRETTHKAKMFSRHEIVSL). Zn(2+)-binding residues include Cys-98, Cys-101, Cys-127, and His-132. Residues 575–634 (YEDSTSTADTQPSNELSCNTEDNWTLNSLSEETNPKNKDYYRTNKQKNTTDSTNRKEIPM) are disordered. Residues 577–606 (DSTSTADTQPSNELSCNTEDNWTLNSLSEE) are compositionally biased toward polar residues. A compositionally biased stretch (basic and acidic residues) spans 607–616 (TNPKNKDYYR).

The protein localises to the cytoplasm. Functionally, plays a role in cardiac repolarization possibly by stabilizing membrane expression of the potassium channel kcnh6a/zerg, or by assisting its synthesis, folding or export from the endoplasmic reticulum, in a heat shock protein-dependent manner. The chain is RING finger protein 207 (rnf207b) from Danio rerio (Zebrafish).